The sequence spans 264 residues: Vacuolar protein sorting-associated protein 75 (264 aa).

Phosphoserine is present on Ser3. Positions 223-264 are disordered; sequence LEDEEGESGLSADGDSEDDDGSLGEVDLPLSDEEPSSKKRKV.

It belongs to the nucleosome assembly protein (NAP) family. Homodimer. Homotetramer. Forms a complex with RTT109; consisting of a VPS75 dimer contacted by two RTT109 subunits. Interacts with RTT109; the interaction is direct. Interacts with ASF1. Interacts with histone H3/H4 heterodimers and heterotetramers via histone H3.

It is found in the nucleus. Functionally, histone chaperone which acts as a cofactor stimulating histone H3 acetylation by RTT109. Preferentially stimulates histone H3 'Lys-9' acetylation by RTT109. May also stimulate histone H3 'Lys-56' acetylation by RTT109. Assembles nucleosomes (in vitro). The chain is Vacuolar protein sorting-associated protein 75 (VPS75) from Saccharomyces cerevisiae (strain ATCC 204508 / S288c) (Baker's yeast).